Consider the following 371-residue polypeptide: Chaperone protein DnaJ (371 aa).

The J domain occupies 5–70 (CYYEILNVSK…SKRSRYDQFG (66 aa)). Residues 127 to 204 (GVEKEITIPR…CYGNGKVKKQ (78 aa)) form a CR-type zinc finger. Residues C140, C143, C156, C159, C178, C181, C192, and C195 each coordinate Zn(2+). 4 CXXCXGXG motif repeats span residues 140 to 147 (CDSCDGTG), 156 to 163 (CHACHGQG), 178 to 185 (CPVCNGTG), and 192 to 199 (CDACYGNG).

Belongs to the DnaJ family. In terms of assembly, homodimer. Requires Zn(2+) as cofactor.

Its subcellular location is the cytoplasm. Participates actively in the response to hyperosmotic and heat shock by preventing the aggregation of stress-denatured proteins and by disaggregating proteins, also in an autonomous, DnaK-independent fashion. Unfolded proteins bind initially to DnaJ; upon interaction with the DnaJ-bound protein, DnaK hydrolyzes its bound ATP, resulting in the formation of a stable complex. GrpE releases ADP from DnaK; ATP binding to DnaK triggers the release of the substrate protein, thus completing the reaction cycle. Several rounds of ATP-dependent interactions between DnaJ, DnaK and GrpE are required for fully efficient folding. Also involved, together with DnaK and GrpE, in the DNA replication of plasmids through activation of initiation proteins. The sequence is that of Chaperone protein DnaJ from Francisella tularensis subsp. tularensis (strain WY96-3418).